The following is a 331-amino-acid chain: Protein RecA (331 aa).

Position 67–74 (67–74 (GPESSGKT)) interacts with ATP.

This sequence belongs to the RecA family.

The protein resides in the cytoplasm. In terms of biological role, can catalyze the hydrolysis of ATP in the presence of single-stranded DNA, the ATP-dependent uptake of single-stranded DNA by duplex DNA, and the ATP-dependent hybridization of homologous single-stranded DNAs. It interacts with LexA causing its activation and leading to its autocatalytic cleavage. This is Protein RecA from Wigglesworthia glossinidia brevipalpis.